Reading from the N-terminus, the 560-residue chain is Eukaryotic translation initiation factor 3 subunit D-1 (560 aa).

The interval 98–166 (VQKPPHQRGR…RGPPPKMRES (69 aa)) is disordered. Residues 100-121 (KPPHQRGRFRNMRNSRSGRGRN) show a composition bias toward basic residues. Position 128 is a phosphothreonine (T128). A compositionally biased stretch (basic residues) spans 147 to 156 (GRGMGKKFGH). Residues 291–305 (EFDLLTVNESSVEPP) are RNA gate.

The protein belongs to the eIF-3 subunit D family. As to quaternary structure, component of the eukaryotic translation initiation factor 3 (eIF-3) complex. The eIF-3 complex interacts with pix.

The protein resides in the cytoplasm. Functionally, mRNA cap-binding component of the eukaryotic translation initiation factor 3 (eIF-3) complex, which is involved in protein synthesis of a specialized repertoire of mRNAs and, together with other initiation factors, stimulates binding of mRNA and methionyl-tRNAi to the 40S ribosome. The eIF-3 complex specifically targets and initiates translation of a subset of mRNAs involved in cell proliferation. In the eIF-3 complex, eif3d specifically recognizes and binds the 7-methylguanosine cap of a subset of mRNAs. The sequence is that of Eukaryotic translation initiation factor 3 subunit D-1 from Drosophila simulans (Fruit fly).